Reading from the N-terminus, the 431-residue chain is Serine hydroxymethyltransferase (431 aa).

121–123 (AHV) serves as a coordination point for (6S)-5,6,7,8-tetrahydrofolate. The residue at position 227 (K227) is an N6-(pyridoxal phosphate)lysine.

Belongs to the SHMT family. Homodimer. Requires pyridoxal 5'-phosphate as cofactor.

It localises to the cytoplasm. The protein operates within amino-acid biosynthesis; glycine biosynthesis; glycine from L-serine: step 1/1. In terms of biological role, catalyzes the reversible interconversion of serine and glycine with a modified folate serving as the one-carbon carrier. Also exhibits a pteridine-independent aldolase activity toward beta-hydroxyamino acids, producing glycine and aldehydes, via a retro-aldol mechanism. In Metallosphaera sedula (strain ATCC 51363 / DSM 5348 / JCM 9185 / NBRC 15509 / TH2), this protein is Serine hydroxymethyltransferase.